The primary structure comprises 631 residues: 1-deoxy-D-xylulose-5-phosphate synthase (631 aa).

Thiamine diphosphate is bound by residues His-87 and 128 to 130 (GHS). Residue Asp-159 participates in Mg(2+) binding. Thiamine diphosphate is bound by residues 160–161 (GA), Asn-188, Phe-295, and Glu-378. Position 188 (Asn-188) interacts with Mg(2+).

Belongs to the transketolase family. DXPS subfamily. As to quaternary structure, homodimer. It depends on Mg(2+) as a cofactor. Thiamine diphosphate serves as cofactor.

It carries out the reaction D-glyceraldehyde 3-phosphate + pyruvate + H(+) = 1-deoxy-D-xylulose 5-phosphate + CO2. It participates in metabolic intermediate biosynthesis; 1-deoxy-D-xylulose 5-phosphate biosynthesis; 1-deoxy-D-xylulose 5-phosphate from D-glyceraldehyde 3-phosphate and pyruvate: step 1/1. Catalyzes the acyloin condensation reaction between C atoms 2 and 3 of pyruvate and glyceraldehyde 3-phosphate to yield 1-deoxy-D-xylulose-5-phosphate (DXP). This chain is 1-deoxy-D-xylulose-5-phosphate synthase, found in Pseudomonas syringae pv. tomato (strain ATCC BAA-871 / DC3000).